The sequence spans 148 residues: Glutamyl-tRNA(Gln) amidotransferase subunit C, mitochondrial (148 aa).

It belongs to the GatC family. As to quaternary structure, subunit of the heterotrimeric GatCAB amidotransferase (AdT) complex, composed of A, B and C subunits.

Its subcellular location is the mitochondrion. The enzyme catalyses L-glutamyl-tRNA(Gln) + L-glutamine + ATP + H2O = L-glutaminyl-tRNA(Gln) + L-glutamate + ADP + phosphate + H(+). Functionally, allows the formation of correctly charged Gln-tRNA(Gln) through the transamidation of misacylated Glu-tRNA(Gln) in the mitochondria. The reaction takes place in the presence of glutamine and ATP through an activated gamma-phospho-Glu-tRNA(Gln). The chain is Glutamyl-tRNA(Gln) amidotransferase subunit C, mitochondrial from Drosophila simulans (Fruit fly).